The primary structure comprises 511 residues: 2-isopropylmalate synthase (511 aa).

One can recognise a Pyruvate carboxyltransferase domain in the interval 5–267 (LIIFDTTLRD…DTNIDTMHIL (263 aa)). Mn(2+) is bound by residues D14, H202, H204, and N238. Positions 393–511 (KLVSLKVCTE…TVTNKAHPQI (119 aa)) are regulatory domain.

Belongs to the alpha-IPM synthase/homocitrate synthase family. LeuA type 1 subfamily. In terms of assembly, homodimer. Mn(2+) serves as cofactor.

Its subcellular location is the cytoplasm. The enzyme catalyses 3-methyl-2-oxobutanoate + acetyl-CoA + H2O = (2S)-2-isopropylmalate + CoA + H(+). Its pathway is amino-acid biosynthesis; L-leucine biosynthesis; L-leucine from 3-methyl-2-oxobutanoate: step 1/4. Its function is as follows. Catalyzes the condensation of the acetyl group of acetyl-CoA with 3-methyl-2-oxobutanoate (2-ketoisovalerate) to form 3-carboxy-3-hydroxy-4-methylpentanoate (2-isopropylmalate). The sequence is that of 2-isopropylmalate synthase from Vesicomyosocius okutanii subsp. Calyptogena okutanii (strain HA).